Consider the following 386-residue polypeptide: ADP,ATP carrier protein, mitochondrial (386 aa).

Residues 1–77 (MADMNQHPTV…SNASPVFVQA (77 aa)) constitute a mitochondrion transit peptide. Solcar repeat units lie at residues 84–177 (AAFA…FKRL), 189–281 (KWFA…LKPV), and 289–375 (DSFF…LQVL). Transmembrane regions (helical) follow at residues 86–113 (FATD…VKLL), 154–178 (TANV…KRLF), 187–207 (YWKW…SSLF), 257–278 (FNIS…YDSL), and 292–312 (FASF…SYPI). ADP is bound by residues R159 and K171. Residue R316 coordinates ADP. The segment at 316–321 (RRRMMM) is important for transport activity. Positions 316–321 (RRRMMM) match the Nucleotide carrier signature motif motif. A helical membrane pass occupies residues 352–372 (AGANILRAVAGAGVLAGYDKL).

Belongs to the mitochondrial carrier (TC 2.A.29) family. In terms of assembly, monomer.

Its subcellular location is the mitochondrion inner membrane. The catalysed reaction is ADP(in) + ATP(out) = ADP(out) + ATP(in). With respect to regulation, the matrix-open state (m-state) is inhibited by the membrane-permeable bongkrekic acid (BKA). The cytoplasmic-open state (c-state) is inhibited by the membrane-impermeable toxic inhibitor carboxyatractyloside (CATR). Functionally, ADP:ATP antiporter that mediates import of ADP into the mitochondrial matrix for ATP synthesis, and export of ATP out to fuel the cell. Cycles between the cytoplasmic-open state (c-state) and the matrix-open state (m-state): operates by the alternating access mechanism with a single substrate-binding site intermittently exposed to either the cytosolic (c-state) or matrix (m-state) side of the inner mitochondrial membrane. This Solanum tuberosum (Potato) protein is ADP,ATP carrier protein, mitochondrial (ANT).